The chain runs to 180 residues: MFDIGWSELLVIGVVALIAIGPKELPGVLRMVGQWMGKARRMASEFQGQFQEAMREAEMADLKKSFDEVKEAASGFSPSGMMSSLQRDVDKALDIEGVDKPVESQPAASAAPETSATVEAPATPTTPEPPRVETFVEADAHQAVGEPLAIVREIKPEPQPQSLDGAAPAEAERLKDAKAS.

The helical transmembrane segment at 1 to 21 threads the bilayer; it reads MFDIGWSELLVIGVVALIAIG. Positions 95–180 are disordered; sequence IEGVDKPVES…AERLKDAKAS (86 aa). Residues 103-123 show a composition bias toward low complexity; the sequence is ESQPAASAAPETSATVEAPAT. Residues 170–180 are compositionally biased toward basic and acidic residues; it reads EAERLKDAKAS.

This sequence belongs to the TatB family. In terms of assembly, the Tat system comprises two distinct complexes: a TatABC complex, containing multiple copies of TatA, TatB and TatC subunits, and a separate TatA complex, containing only TatA subunits. Substrates initially bind to the TatABC complex, which probably triggers association of the separate TatA complex to form the active translocon.

Its subcellular location is the cell inner membrane. In terms of biological role, part of the twin-arginine translocation (Tat) system that transports large folded proteins containing a characteristic twin-arginine motif in their signal peptide across membranes. Together with TatC, TatB is part of a receptor directly interacting with Tat signal peptides. TatB may form an oligomeric binding site that transiently accommodates folded Tat precursor proteins before their translocation. This chain is Sec-independent protein translocase protein TatB, found in Bradyrhizobium sp. (strain BTAi1 / ATCC BAA-1182).